The following is a 325-amino-acid chain: Dimethylallyltranstransferase (325 aa).

Isopentenyl diphosphate is bound by residues Arg54 and His84. Mg(2+)-binding residues include Asp91 and Asp95. Residues 91–95 carry the DDXXD motif motif; that stretch reads DRVVD. Arg101 lines the isopentenyl diphosphate pocket. The short motif at 217-221 is the DDXXD motif element; the sequence is RDIIA.

Belongs to the FPP/GGPP synthase family. It depends on Mg(2+) as a cofactor.

The catalysed reaction is isopentenyl diphosphate + dimethylallyl diphosphate = (2E)-geranyl diphosphate + diphosphate. The protein operates within isoprenoid biosynthesis; geranyl diphosphate biosynthesis; geranyl diphosphate from dimethylallyl diphosphate and isopentenyl diphosphate: step 1/1. In terms of biological role, catalyzes the addition of isopentenyl diphosphate (IPP) onto dimethylallyl diphosphate (DMAPP) to form geranyl pyrophosphate (GPP). Is probably involved in the biosynthesis of decaprenyl diphosphate, which is required for mycobacterial cell wall synthesis. Could be required for host endothelial-cell invasion and/or intracellular survival. The protein is Dimethylallyltranstransferase of Mycobacterium tuberculosis (strain ATCC 25618 / H37Rv).